A 448-amino-acid chain; its full sequence is Tubulin beta chain (448 aa).

Residues Gln-11, Glu-69, Ser-138, Gly-142, Thr-143, Gly-144, Asn-204, and Asn-226 each coordinate GTP. Glu-69 serves as a coordination point for Mg(2+). The segment at 425–448 (YQDASISEGEEEYLEEEEPLEHEE) is disordered. Over residues 432 to 448 (EGEEEYLEEEEPLEHEE) the composition is skewed to acidic residues.

Belongs to the tubulin family. As to quaternary structure, dimer of alpha and beta chains. A typical microtubule is a hollow water-filled tube with an outer diameter of 25 nm and an inner diameter of 15 nM. Alpha-beta heterodimers associate head-to-tail to form protofilaments running lengthwise along the microtubule wall with the beta-tubulin subunit facing the microtubule plus end conferring a structural polarity. Microtubules usually have 13 protofilaments but different protofilament numbers can be found in some organisms and specialized cells. It depends on Mg(2+) as a cofactor.

The protein resides in the cytoplasm. It is found in the cytoskeleton. Its function is as follows. Tubulin is the major constituent of microtubules, a cylinder consisting of laterally associated linear protofilaments composed of alpha- and beta-tubulin heterodimers. Microtubules grow by the addition of GTP-tubulin dimers to the microtubule end, where a stabilizing cap forms. Below the cap, tubulin dimers are in GDP-bound state, owing to GTPase activity of alpha-tubulin. The polypeptide is Tubulin beta chain (Aspergillus flavus).